Consider the following 160-residue polypeptide: Probable NADH dehydrogenase [ubiquinone] 1 beta subcomplex subunit 2, mitochondrial (160 aa).

Belongs to the complex I NDUFB2 subunit family. In terms of assembly, complex I is composed of 45 different subunits.

It localises to the mitochondrion inner membrane. Accessory subunit of the mitochondrial membrane respiratory chain NADH dehydrogenase (Complex I), that is believed not to be involved in catalysis. Complex I functions in the transfer of electrons from NADH to the respiratory chain. The immediate electron acceptor for the enzyme is believed to be ubiquinone. This is Probable NADH dehydrogenase [ubiquinone] 1 beta subcomplex subunit 2, mitochondrial from Caenorhabditis briggsae.